We begin with the raw amino-acid sequence, 103 residues long: Small ribosomal subunit protein uS10 (103 aa).

This sequence belongs to the universal ribosomal protein uS10 family. Part of the 30S ribosomal subunit.

Involved in the binding of tRNA to the ribosomes. This Neisseria gonorrhoeae (strain NCCP11945) protein is Small ribosomal subunit protein uS10.